Reading from the N-terminus, the 22-residue chain is NDMA-dependent alcohol dehydrogenase (22 aa).

This sequence belongs to the zinc-containing alcohol dehydrogenase family. Homotetramer. NADH serves as cofactor.

It is found in the cytoplasm. The catalysed reaction is N,N-dimethyl-4-nitrosoaniline + a primary alcohol = 4-(hydroxylamino)-N,N-dimethylaniline + an aldehyde. It carries out the reaction ethanol + A = acetaldehyde + AH2. This is a novel enzyme, catalytically different from common alcohol dehydrogenases. It is effective in oxidizing ethanol, other primary alcohols and benzylalcohol only in the presence of p-nitroso-N,N-dimethylaniline (NDMA) as an electron acceptor. NADH acts as a cofactor here instead of as a coenzyme. The polypeptide is NDMA-dependent alcohol dehydrogenase (Rhodococcus erythropolis (Arthrobacter picolinophilus)).